The primary structure comprises 98 residues: Integration host factor subunit beta (98 aa).

It belongs to the bacterial histone-like protein family. Heterodimer of an alpha and a beta chain.

This protein is one of the two subunits of integration host factor, a specific DNA-binding protein that functions in genetic recombination as well as in transcriptional and translational control. This chain is Integration host factor subunit beta, found in Pseudomonas entomophila (strain L48).